The following is a 389-amino-acid chain: Arrestin-C (389 aa).

The protein belongs to the arrestin family. In terms of tissue distribution, retina and pineal gland.

May play a role in an as yet undefined retina-specific signal transduction. Could bind to photoactivated-phosphorylated red/green opsins. This is Arrestin-C (arr3) from Lithobates pipiens (Northern leopard frog).